Consider the following 489-residue polypeptide: Protein P7 (489 aa).

RNA-binding regions lie at residues threonine 129–leucine 251 and alanine 321–asparagine 351.

Belongs to the phytoreovirus protein P7 family.

Its subcellular location is the virion. The protein resides in the host cytoplasm. Functionally, probable component of the transcriptional machinery present in the inner capsid. Displays dsRNA binding activity and may play an important role in the sorting of viral RNA and virion assembly. Together with the RNA-directed RNA polymerase P1 and capping enzyme P5, forms an transcriptional complex positioned near the channels situated at each of the five-fold vertices of the core. This chain is Protein P7, found in Rice gall dwarf virus (RGDV).